A 326-amino-acid chain; its full sequence is MSKIQVNNIEALNNAMDLALERDQNVVLYGQDAGFEGGVFRATKGLQQKYGSERVWDCPIAENSMAGIGVGAAIGGLKPIVEIQFSGFSFPAMFQIFVHAARIRNRSRGVYTAPLVVRMPMGGGIKALEHHSETLEAIYAQIAGLKTVMPSNPYDTKGLFLAAIESPDPVIFFEPKKLYRAFRQEIPSDYYTVPIGEANLISEGSELTIVSYGPTMFDLINLVYSGELKDKGIELIDLRTISPWDKQTVFNSVKKTGRLLVVTEAVKSFTTSAEIITSVTEELFTYLKKAPQRVTGFDIVVPLARGEKYQFEINARVIDAVNQLLK.

Glu-62 is a thiamine diphosphate binding site.

Heterodimer of an alpha and a beta chain. Requires thiamine diphosphate as cofactor.

It catalyses the reaction N(6)-[(R)-lipoyl]-L-lysyl-[protein] + pyruvate + H(+) = N(6)-[(R)-S(8)-acetyldihydrolipoyl]-L-lysyl-[protein] + CO2. In terms of biological role, the pyruvate dehydrogenase complex catalyzes the overall conversion of pyruvate to acetyl-CoA and CO(2). It contains multiple copies of three enzymatic components: pyruvate dehydrogenase (E1), dihydrolipoamide acetyltransferase (E2) and lipoamide dehydrogenase (E3). This is Pyruvate dehydrogenase E1 component subunit beta (pdhB) from Mycoplasma genitalium (strain ATCC 33530 / DSM 19775 / NCTC 10195 / G37) (Mycoplasmoides genitalium).